A 222-amino-acid chain; its full sequence is uncharacterized protein (222 aa).

The region spanning 8–77 (AKKNQIIYRY…NTPGYFVCKD (70 aa)) is the HTH gntR-type domain.

This is an uncharacterized protein from Mycoplasma genitalium (strain ATCC 33530 / DSM 19775 / NCTC 10195 / G37) (Mycoplasmoides genitalium).